The following is a 193-amino-acid chain: D-alanyl-D-alanine dipeptidase (193 aa).

Zn(2+)-binding residues include histidine 98 and aspartate 105. The active-site Proton donor/acceptor is the glutamate 162. Residue histidine 165 coordinates Zn(2+).

This sequence belongs to the peptidase M15D family. Zn(2+) serves as cofactor.

It is found in the cytoplasm. The enzyme catalyses D-alanyl-D-alanine + H2O = 2 D-alanine. Catalyzes hydrolysis of the D-alanyl-D-alanine dipeptide. May have a role in cell-wall turnover. In Escherichia coli (strain K12), this protein is D-alanyl-D-alanine dipeptidase.